Here is a 148-residue protein sequence, read N- to C-terminus: Large ribosomal subunit protein bL9 (148 aa).

Belongs to the bacterial ribosomal protein bL9 family.

Functionally, binds to the 23S rRNA. In Pseudomonas putida (strain W619), this protein is Large ribosomal subunit protein bL9.